The following is a 158-amino-acid chain: COP9 signalosome complex subunit 9 (158 aa).

Residues 5–119 (LLRNLIEDKT…SVARRATVLE (115 aa)) enclose the PCI domain.

In terms of assembly, component of a COP9 signalosome-like (CSN) complex.

Its subcellular location is the cytoplasm. It is found in the nucleus. Component of the COP9 signalosome (CSN) complex that acts as a regulator of the ubiquitin (Ubl) conjugation pathway by mediating the deneddylation of the cullin subunit of SCF-type E3 ubiquitin-protein ligase complexes. The complex is involved in the regulation of the mating pheromone response. This is COP9 signalosome complex subunit 9 (CSN9) from Kluyveromyces lactis (strain ATCC 8585 / CBS 2359 / DSM 70799 / NBRC 1267 / NRRL Y-1140 / WM37) (Yeast).